A 451-amino-acid polypeptide reads, in one-letter code: Enolase (451 aa).

Gln167 provides a ligand contact to (2R)-2-phosphoglycerate. Glu209 (proton donor) is an active-site residue. The Mg(2+) site is built by Asp250, Glu307, and Asp334. Residues Lys359, Arg388, Ser389, and Lys410 each contribute to the (2R)-2-phosphoglycerate site. Catalysis depends on Lys359, which acts as the Proton acceptor.

It belongs to the enolase family. The cofactor is Mg(2+).

The protein resides in the cytoplasm. It is found in the secreted. Its subcellular location is the cell surface. It catalyses the reaction (2R)-2-phosphoglycerate = phosphoenolpyruvate + H2O. It functions in the pathway carbohydrate degradation; glycolysis; pyruvate from D-glyceraldehyde 3-phosphate: step 4/5. Functionally, catalyzes the reversible conversion of 2-phosphoglycerate (2-PG) into phosphoenolpyruvate (PEP). It is essential for the degradation of carbohydrates via glycolysis. This is Enolase from Mesomycoplasma hyopneumoniae (strain J / ATCC 25934 / NCTC 10110) (Mycoplasma hyopneumoniae).